A 154-amino-acid chain; its full sequence is uncharacterized protein (154 aa).

The next 2 membrane-spanning stretches (helical) occupy residues 54 to 74 (FLIT…IYLL) and 81 to 101 (FAFV…FFLS).

The protein localises to the cell membrane. This is an uncharacterized protein from Mycoplasma genitalium (strain ATCC 33530 / DSM 19775 / NCTC 10195 / G37) (Mycoplasmoides genitalium).